The primary structure comprises 382 residues: Flap endonuclease 1-B (382 aa).

The N-domain stretch occupies residues 1 to 104; that stretch reads MGIHGLAKLI…GELAKRSERR (104 aa). Asp34 provides a ligand contact to Mg(2+). Arg47 and Arg70 together coordinate DNA. Mg(2+) contacts are provided by Asp86, Glu158, Glu160, Asp179, and Asp181. The I-domain stretch occupies residues 122 to 253; it reads NIEKFNKRLV…KRAIDLIRQH (132 aa). Glu158 contributes to the DNA binding site. DNA-binding residues include Gly231 and Asp233. A Mg(2+)-binding site is contributed by Asp233. Residues 336–344 form an interaction with PCNA region; the sequence is TQGRLDDFF. Residues 352–382 are disordered; that stretch reads STKRKEVESKGSTKKKSKTGGTPAGKFKRGK.

The protein belongs to the XPG/RAD2 endonuclease family. FEN1 subfamily. In terms of assembly, interacts with PCNA. Three molecules of fen1 bind to one PCNA trimer with each molecule binding to one PCNA monomer. PCNA stimulates the nuclease activity without altering cleavage specificity. Mg(2+) serves as cofactor. Phosphorylated. Phosphorylation upon DNA damage induces relocalization to the nuclear plasma.

The protein resides in the nucleus. Its subcellular location is the nucleolus. The protein localises to the nucleoplasm. It is found in the mitochondrion. Functionally, structure-specific nuclease with 5'-flap endonuclease and 5'-3' exonuclease activities involved in DNA replication and repair. During DNA replication, cleaves the 5'-overhanging flap structure that is generated by displacement synthesis when DNA polymerase encounters the 5'-end of a downstream Okazaki fragment. It enters the flap from the 5'-end and then tracks to cleave the flap base, leaving a nick for ligation. Also involved in the long patch base excision repair (LP-BER) pathway, by cleaving within the apurinic/apyrimidinic (AP) site-terminated flap. Acts as a genome stabilization factor that prevents flaps from equilibrating into structures that lead to duplications and deletions. Also possesses 5'-3' exonuclease activity on nicked or gapped double-stranded DNA, and exhibits RNase H activity. Also involved in replication and repair of rDNA and in repairing mitochondrial DNA. The sequence is that of Flap endonuclease 1-B (fen1-b) from Xenopus laevis (African clawed frog).